The primary structure comprises 217 residues: MINLILLGLPGAGKGTASEQIVDKYHLAHISTGDMFREAMANKTPVGLEAKSYIDKGDLVPDEVTAKLVEERLGQDDVKNGFILDGFPRTTNQAELLDEITTRLNKQLTNVIAIDVKEETLIDRLSARFMCKNCGATYNKFSKKPKVEGTCDRCGGHEFYQREDDKPEVVKNRLEVNEKMNAPLKEYYDKKGLLATVNGEQVPEKVFADIDAILSKD.

An ATP-binding site is contributed by 11-16 (GAGKGT). An NMP region spans residues 31–60 (STGDMFREAMANKTPVGLEAKSYIDKGDLV). AMP-binding positions include threonine 32, arginine 37, 58 to 60 (DLV), 86 to 89 (GFPR), and glutamine 93. Positions 127–165 (ARFMCKNCGATYNKFSKKPKVEGTCDRCGGHEFYQREDD) are LID. Position 128 (arginine 128) interacts with ATP. Positions 131 and 134 each coordinate Zn(2+). 137-138 (TY) contributes to the ATP binding site. Residues cysteine 151 and cysteine 154 each coordinate Zn(2+). The AMP site is built by arginine 162 and arginine 173. Glutamine 201 lines the ATP pocket.

Belongs to the adenylate kinase family. In terms of assembly, monomer.

The protein resides in the cytoplasm. It carries out the reaction AMP + ATP = 2 ADP. Its pathway is purine metabolism; AMP biosynthesis via salvage pathway; AMP from ADP: step 1/1. Catalyzes the reversible transfer of the terminal phosphate group between ATP and AMP. Plays an important role in cellular energy homeostasis and in adenine nucleotide metabolism. The sequence is that of Adenylate kinase from Lactobacillus delbrueckii subsp. bulgaricus (strain ATCC 11842 / DSM 20081 / BCRC 10696 / JCM 1002 / NBRC 13953 / NCIMB 11778 / NCTC 12712 / WDCM 00102 / Lb 14).